A 264-amino-acid polypeptide reads, in one-letter code: Meiotic recombination protein REC102 (264 aa).

It belongs to the TOP6B-like family. Interacts with REC104; seems to form a functional unit with REC104. REC102-REC104 interacts with SKI8-SPO11 and this interaction is required for proper subcellular location of the proteins during the initiation of recombination. Interacts with MEI4, REC114 and SPO11.

Its subcellular location is the nucleus. In terms of biological role, required for formation of the SPO11-mediated double-strand breaks (DSBs) that initiate meiotic recombination. May mediate the interaction between SPO11 subunits during meiosis. Also needed for homolog chromosome pairing, synaptonemal complex formation, and for the proper timing of the first meiotic division. Not required for mitosis and mitotic DNA repair mechanisms. The polypeptide is Meiotic recombination protein REC102 (Saccharomyces cerevisiae (strain ATCC 204508 / S288c) (Baker's yeast)).